Consider the following 470-residue polypeptide: Argininosuccinate lyase (470 aa).

This sequence belongs to the lyase 1 family. Argininosuccinate lyase subfamily.

It is found in the cytoplasm. The enzyme catalyses 2-(N(omega)-L-arginino)succinate = fumarate + L-arginine. It participates in amino-acid biosynthesis; L-arginine biosynthesis; L-arginine from L-ornithine and carbamoyl phosphate: step 3/3. The sequence is that of Argininosuccinate lyase from Mycobacterium marinum (strain ATCC BAA-535 / M).